The following is a 250-amino-acid chain: Bacteriorhodopsin-I (250 aa).

Transmembrane regions (helical) follow at residues 7–27 (EGIWLWLGTAGMFLGMLYFIA), 42–62 (IATILITAIAFVNYLAMALGF), 81–101 (YTDWLFTTPLLLYDLGLLAGA), 114–134 (VLMIGTGVVATLSAGSGVLSA), 139–159 (LVWWGISTAFLLVLLYFLFSS), 185–205 (VWLVYPVWWLVGSEGLGLVGI), and 207–227 (IETAGFMVIDLVAKVGFGIIL). The residue at position 220 (Lys-220) is an N6-(retinylidene)lysine.

The protein belongs to the archaeal/bacterial/fungal opsin family. In terms of processing, the covalent binding of retinal to the apoprotein, bacterioopsin, generates bacteriorhodopsin.

It localises to the membrane. In terms of biological role, light-driven proton pump. The polypeptide is Bacteriorhodopsin-I (bop) (Haloarcula marismortui (strain ATCC 43049 / DSM 3752 / JCM 8966 / VKM B-1809) (Halobacterium marismortui)).